The chain runs to 92 residues: Small ribosomal subunit protein uS19c (92 aa).

The protein belongs to the universal ribosomal protein uS19 family.

It localises to the plastid. Its subcellular location is the chloroplast. Functionally, protein S19 forms a complex with S13 that binds strongly to the 16S ribosomal RNA. This chain is Small ribosomal subunit protein uS19c, found in Cyanidium caldarium (Red alga).